The primary structure comprises 474 residues: GTPase Der (474 aa).

2 consecutive EngA-type G domains span residues 3–167 (FTVA…GVDR) and 204–379 (LRVA…MVWN). GTP-binding positions include 9–16 (GRPNVGKS), 56–60 (DTAGL), 119–122 (NKSE), 210–217 (GRPNAGKS), 257–261 (DTAGM), and 322–325 (NKWD). Residues 380-464 (KRISTAKLNR…PIRIHLKASE (85 aa)) enclose the KH-like domain.

This sequence belongs to the TRAFAC class TrmE-Era-EngA-EngB-Septin-like GTPase superfamily. EngA (Der) GTPase family. In terms of assembly, associates with the 50S ribosomal subunit.

Functionally, GTPase that plays an essential role in the late steps of ribosome biogenesis. The sequence is that of GTPase Der from Allorhizobium ampelinum (strain ATCC BAA-846 / DSM 112012 / S4) (Agrobacterium vitis (strain S4)).